The primary structure comprises 384 residues: S-adenosylmethionine synthase (384 aa).

His15 contributes to the ATP binding site. Position 17 (Asp17) interacts with Mg(2+). Glu43 lines the K(+) pocket. L-methionine is bound by residues Glu56 and Gln99. A flexible loop region spans residues 99-109 (QSPDINQGVDR). ATP is bound by residues 164–166 (DAK), 230–231 (RF), Asp239, 245–246 (RK), Ala262, and Lys266. An L-methionine-binding site is contributed by Asp239. Lys270 lines the L-methionine pocket.

It belongs to the AdoMet synthase family. Homotetramer; dimer of dimers. It depends on Mg(2+) as a cofactor. K(+) is required as a cofactor.

The protein localises to the cytoplasm. It catalyses the reaction L-methionine + ATP + H2O = S-adenosyl-L-methionine + phosphate + diphosphate. It participates in amino-acid biosynthesis; S-adenosyl-L-methionine biosynthesis; S-adenosyl-L-methionine from L-methionine: step 1/1. Functionally, catalyzes the formation of S-adenosylmethionine (AdoMet) from methionine and ATP. The overall synthetic reaction is composed of two sequential steps, AdoMet formation and the subsequent tripolyphosphate hydrolysis which occurs prior to release of AdoMet from the enzyme. This chain is S-adenosylmethionine synthase, found in Salmonella arizonae (strain ATCC BAA-731 / CDC346-86 / RSK2980).